Consider the following 577-residue polypeptide: Protein downstream neighbor of son homolog (577 aa).

Disordered stretches follow at residues M1 to N67 and F328 to M382. Residues E362–S375 show a composition bias toward acidic residues.

This sequence belongs to the DONSON family. Component of the replisome complex.

The protein localises to the nucleus. In terms of biological role, replisome component that maintains genome stability by protecting stalled or damaged replication forks. After the induction of replication stress, required for the stabilization of stalled replication forks, the efficient activation of the intra-S-phase and G/2M cell-cycle checkpoints and the maintenance of genome stability. The chain is Protein downstream neighbor of son homolog from Xenopus tropicalis (Western clawed frog).